We begin with the raw amino-acid sequence, 412 residues long: Phosphoglycerate kinase (412 aa).

Residues 26 to 28 (DFN), Arg42, 65 to 68 (HLGR), Arg133, and Arg166 contribute to the substrate site. Residues Lys217, Gly308, Glu339, and 368 to 371 (GGDS) each bind ATP.

This sequence belongs to the phosphoglycerate kinase family. Monomer.

Its subcellular location is the cytoplasm. The catalysed reaction is (2R)-3-phosphoglycerate + ATP = (2R)-3-phospho-glyceroyl phosphate + ADP. It participates in carbohydrate degradation; glycolysis; pyruvate from D-glyceraldehyde 3-phosphate: step 2/5. The polypeptide is Phosphoglycerate kinase (Synechococcus sp. (strain JA-2-3B'a(2-13)) (Cyanobacteria bacterium Yellowstone B-Prime)).